A 263-amino-acid chain; its full sequence is Pollen allergen Phl p 1 (263 aa).

Residues 1–23 (MASSSSVLLVVVLFAVFLGSAYG) form the signal peptide. N32 carries an N-linked (GlcNAc...) asparagine glycan. In terms of domain architecture, Expansin-like EG45 spans 61-167 (GGACGYKDVD…RRVKCKYPEG (107 aa)). 3 disulfides stabilise this stretch: C64–C92, C95–C162, and C100–C106. An Expansin-like CBD domain is found at 181-262 (NYLALLVKYV…GWKADTSYES (82 aa)).

This sequence belongs to the expansin family. Expansin B subfamily. Homodimer.

The protein localises to the secreted. The chain is Pollen allergen Phl p 1 (PHLPI) from Phleum pratense (Common timothy).